Here is a 317-residue protein sequence, read N- to C-terminus: Pantothenate kinase (317 aa).

101 to 108 (GSVAVGKS) is an ATP binding site.

This sequence belongs to the prokaryotic pantothenate kinase family.

It is found in the cytoplasm. The catalysed reaction is (R)-pantothenate + ATP = (R)-4'-phosphopantothenate + ADP + H(+). Its pathway is cofactor biosynthesis; coenzyme A biosynthesis; CoA from (R)-pantothenate: step 1/5. In Actinobacillus succinogenes (strain ATCC 55618 / DSM 22257 / CCUG 43843 / 130Z), this protein is Pantothenate kinase.